The sequence spans 74 residues: Protein SlyX homolog (74 aa).

This sequence belongs to the SlyX family.

This Aliivibrio fischeri (strain ATCC 700601 / ES114) (Vibrio fischeri) protein is Protein SlyX homolog.